The chain runs to 308 residues: Glutaminase (308 aa).

Ser66, Asn117, Glu161, Asn168, Tyr192, Tyr244, and Val262 together coordinate substrate.

This sequence belongs to the glutaminase family. As to quaternary structure, homotetramer.

The catalysed reaction is L-glutamine + H2O = L-glutamate + NH4(+). The sequence is that of Glutaminase from Cronobacter sakazakii (strain ATCC BAA-894) (Enterobacter sakazakii).